The following is a 548-amino-acid chain: Chaperonin GroEL (548 aa).

ATP is bound by residues 30-33 (TLGP), lysine 51, 87-91 (DGTTT), glycine 415, 479-481 (NAA), and aspartate 495.

It belongs to the chaperonin (HSP60) family. Forms a cylinder of 14 subunits composed of two heptameric rings stacked back-to-back. Interacts with the co-chaperonin GroES.

It localises to the cytoplasm. It carries out the reaction ATP + H2O + a folded polypeptide = ADP + phosphate + an unfolded polypeptide.. In terms of biological role, together with its co-chaperonin GroES, plays an essential role in assisting protein folding. The GroEL-GroES system forms a nano-cage that allows encapsulation of the non-native substrate proteins and provides a physical environment optimized to promote and accelerate protein folding. The sequence is that of Chaperonin GroEL from Salmonella gallinarum (strain 287/91 / NCTC 13346).